Reading from the N-terminus, the 568-residue chain is Putative ABC transporter ATP-binding protein EF_2153 (568 aa).

2 consecutive ABC transporter domains span residues 6–247 (ITFN…GIRE) and 301–535 (LRLE…ASLK). ATP contacts are provided by residues 40 to 47 (GPSGSGKS) and 335 to 342 (GKNGAGKS).

Belongs to the ABC transporter superfamily.

It localises to the cell membrane. Functionally, probably part of an ABC transporter complex. Responsible for energy coupling to the transport system. The chain is Putative ABC transporter ATP-binding protein EF_2153 from Enterococcus faecalis (strain ATCC 700802 / V583).